Consider the following 105-residue polypeptide: Heat shock protein HspQ (105 aa).

The protein belongs to the HspQ family.

It localises to the cytoplasm. In terms of biological role, involved in the degradation of certain denaturated proteins, including DnaA, during heat shock stress. In Yersinia enterocolitica serotype O:8 / biotype 1B (strain NCTC 13174 / 8081), this protein is Heat shock protein HspQ.